The chain runs to 218 residues: MASRGGGRGRGRGQLTFNMEAVGIGKGDALPPPTLQPSPLFPPLEFHPVPLPAGEEGEYVLALKQELRGAMRQLPYFIRPAVPKRDVERYSDKYQMSGPIDNAIDWNPDWRRLPSELKIRVRKVQKERTTIILPKRPPKSTDDKEETIQKLETLEKKEEEVTSEEDEEKEEEEEKEEGEEEEYDEEEHEEETDYIMSYFDNGEDFGGDSDDNMDEAIY.

The tract at residues Thr130 to Tyr218 is disordered. A compositionally biased stretch (basic and acidic residues) spans Lys139 to Glu160. Composition is skewed to acidic residues over residues Val161–Asp193 and Asn201–Tyr218.

It belongs to the eukaryotic RPC7 RNA polymerase subunit family. As to quaternary structure, component of the RNA polymerase III (Pol III) complex consisting of 17 subunits. Pol III exists as two alternative complexes defined by the mutually exclusive incorporation of subunit POLR3G/RPC7alpha or POLR3GL/RPC7beta. Found in a trimeric complex with POLR3C/RPC3 and POLR3F/RPC6. Directly interacts with POLR3C. In terms of tissue distribution, expressed in the liver.

It is found in the nucleus. Functionally, DNA-dependent RNA polymerase catalyzes the transcription of DNA into RNA using the four ribonucleoside triphosphates as substrates. Specific peripheric component of RNA polymerase III which synthesizes small RNAs, such as 5S rRNA and tRNAs. The chain is DNA-directed RNA polymerase III subunit RPC7-like from Mus musculus (Mouse).